The following is a 684-amino-acid chain: Protein ecdysoneless (684 aa).

Acidic residues predominate over residues 491 to 501 (EPELDSDDDEP). Disordered regions lie at residues 491-528 (EPEL…CQRN) and 603-624 (TSVG…EDDF).

It belongs to the ECD family. Expressed in the ecdysone-producing larval ring gland, nervous system, imaginal disks and gonads.

Its subcellular location is the cytoplasm. In terms of biological role, required in both the follicle cells and the germline for oocyte development. This chain is Protein ecdysoneless, found in Drosophila melanogaster (Fruit fly).